Consider the following 342-residue polypeptide: UDP-xylose transporter 1 (342 aa).

10 helical membrane-spanning segments follow: residues 7–27 (MQMG…SIVI), 36–56 (LGFP…YCTL), 75–95 (VVLF…SLGF), 100–120 (FYQM…TLFL), 132–152 (LFLL…LNFV), 154–174 (SVLS…TNTI), 184–204 (QLLY…GPFV), 221–241 (IVVG…FSTF), 250–270 (VTYQ…GYTL), and 280–300 (IAGI…CSVA). The segment at 305–342 (QASSDSTFLGKDRDTTPLLGQENENHHEAKKLDKHSPV) is disordered. The span at 327–342 (NENHHEAKKLDKHSPV) shows a compositional bias: basic and acidic residues.

This sequence belongs to the TPT transporter family. TPT (TC 2.A.7.9) subfamily. In terms of tissue distribution, ubiquitous.

Its subcellular location is the golgi apparatus membrane. The protein resides in the endoplasmic reticulum membrane. In terms of biological role, nucleotide-sugar transporter that transports UDP-xylose and UMP in a strict counter-exchange mode. The sequence is that of UDP-xylose transporter 1 from Arabidopsis thaliana (Mouse-ear cress).